The sequence spans 82 residues: RNA-binding protein Hfq (82 aa).

The 61-residue stretch at 11–71 folds into the Sm domain; that stretch reads DTFLNHVRKT…ISTIMPGAPI (61 aa).

This sequence belongs to the Hfq family. Homohexamer.

In terms of biological role, RNA chaperone that binds small regulatory RNA (sRNAs) and mRNAs to facilitate mRNA translational regulation in response to envelope stress, environmental stress and changes in metabolite concentrations. Also binds with high specificity to tRNAs. This chain is RNA-binding protein Hfq, found in Bradyrhizobium sp. (strain BTAi1 / ATCC BAA-1182).